The chain runs to 262 residues: Phosphatidylglycerol--prolipoprotein diacylglyceryl transferase (262 aa).

4 helical membrane passes run 9–29, 41–61, 80–100, and 109–129; these read LGPL…ILAV, IIPD…ILGA, IFAI…GALV, and LINT…AQSL. Arg131 lines the a 1,2-diacyl-sn-glycero-3-phospho-(1'-sn-glycerol) pocket. The next 3 membrane-spanning stretches (helical) occupy residues 167–187, 197–217, and 226–246; these read QPTF…ILIF, GHIT…IEGM, and GLRV…MIVI.

The protein belongs to the Lgt family.

It is found in the cell membrane. The catalysed reaction is L-cysteinyl-[prolipoprotein] + a 1,2-diacyl-sn-glycero-3-phospho-(1'-sn-glycerol) = an S-1,2-diacyl-sn-glyceryl-L-cysteinyl-[prolipoprotein] + sn-glycerol 1-phosphate + H(+). The protein operates within protein modification; lipoprotein biosynthesis (diacylglyceryl transfer). Catalyzes the transfer of the diacylglyceryl group from phosphatidylglycerol to the sulfhydryl group of the N-terminal cysteine of a prolipoprotein, the first step in the formation of mature lipoproteins. The chain is Phosphatidylglycerol--prolipoprotein diacylglyceryl transferase from Streptococcus pneumoniae (strain Taiwan19F-14).